A 166-amino-acid chain; its full sequence is Crossover junction endodeoxyribonuclease RuvC (166 aa).

Active-site residues include D11, E71, and D142. Residues D11, E71, and D142 each coordinate Mg(2+).

Belongs to the RuvC family. In terms of assembly, homodimer which binds Holliday junction (HJ) DNA. The HJ becomes 2-fold symmetrical on binding to RuvC with unstacked arms; it has a different conformation from HJ DNA in complex with RuvA. In the full resolvosome a probable DNA-RuvA(4)-RuvB(12)-RuvC(2) complex forms which resolves the HJ. Mg(2+) serves as cofactor.

The protein localises to the cytoplasm. The catalysed reaction is Endonucleolytic cleavage at a junction such as a reciprocal single-stranded crossover between two homologous DNA duplexes (Holliday junction).. Functionally, the RuvA-RuvB-RuvC complex processes Holliday junction (HJ) DNA during genetic recombination and DNA repair. Endonuclease that resolves HJ intermediates. Cleaves cruciform DNA by making single-stranded nicks across the HJ at symmetrical positions within the homologous arms, yielding a 5'-phosphate and a 3'-hydroxyl group; requires a central core of homology in the junction. The consensus cleavage sequence is 5'-(A/T)TT(C/G)-3'. Cleavage occurs on the 3'-side of the TT dinucleotide at the point of strand exchange. HJ branch migration catalyzed by RuvA-RuvB allows RuvC to scan DNA until it finds its consensus sequence, where it cleaves and resolves the cruciform DNA. In Maricaulis maris (strain MCS10) (Caulobacter maris), this protein is Crossover junction endodeoxyribonuclease RuvC.